Here is a 183-residue protein sequence, read N- to C-terminus: dTDP-4-dehydrorhamnose 3,5-epimerase (183 aa).

Residues arginine 24, glutamate 29, 48 to 50 (QDN), and arginine 60 contribute to the substrate site. Catalysis depends on histidine 63, which acts as the Proton acceptor. 2 residues coordinate substrate: lysine 73 and histidine 120. Tyrosine 133 functions as the Proton donor in the catalytic mechanism. Residues glutamate 144 and lysine 169 each contribute to the substrate site.

This sequence belongs to the dTDP-4-dehydrorhamnose 3,5-epimerase family. Homodimer.

It carries out the reaction dTDP-4-dehydro-6-deoxy-alpha-D-glucose = dTDP-4-dehydro-beta-L-rhamnose. It participates in carbohydrate biosynthesis; dTDP-L-rhamnose biosynthesis. Its pathway is bacterial outer membrane biogenesis; LPS O-antigen biosynthesis. In terms of biological role, catalyzes the epimerization of the C3' and C5'positions of dTDP-6-deoxy-D-xylo-4-hexulose, forming dTDP-6-deoxy-L-lyxo-4-hexulose. The polypeptide is dTDP-4-dehydrorhamnose 3,5-epimerase (Salmonella typhimurium (strain LT2 / SGSC1412 / ATCC 700720)).